The primary structure comprises 181 residues: Large ribosomal subunit protein uL5c (181 aa).

Belongs to the universal ribosomal protein uL5 family. Part of the 50S ribosomal subunit; contacts the 5S rRNA.

The protein resides in the plastid. Its subcellular location is the chloroplast. Binds 5S rRNA, forms part of the central protuberance of the 50S subunit. This is Large ribosomal subunit protein uL5c (rpl5) from Guillardia theta (Cryptophyte).